The sequence spans 585 residues: Glycerol-3-phosphate dehydrogenase 2 (585 aa).

Position 37–65 (37–65 (DVVVIGGGVVGSGCALDAATRGLKVALVE)) interacts with FAD.

This sequence belongs to the FAD-dependent glycerol-3-phosphate dehydrogenase family. The cofactor is FAD.

The protein localises to the cytoplasm. The enzyme catalyses a quinone + sn-glycerol 3-phosphate = dihydroxyacetone phosphate + a quinol. This is Glycerol-3-phosphate dehydrogenase 2 (glpD2) from Mycobacterium bovis (strain ATCC BAA-935 / AF2122/97).